The primary structure comprises 494 residues: Hepatic triacylglycerol lipase (494 aa).

The N-terminal stretch at 1–21 is a signal peptide; sequence MGNHLQISVSLVLCIFIQSSA. An N-linked (GlcNAc...) asparagine glycan is attached at Asn-79. Ser-169 serves as the catalytic Nucleophile. The active-site Charge relay system is Asp-195. Residues 255 to 278 form an essential for determining substrate specificity region; the sequence is CHFLELYKHIAEHGLNAITQTINC. His-280 functions as the Charge relay system in the catalytic mechanism. Residues 353 to 487 enclose the PLAT domain; that stretch reads YHYQFKIQFI…HPTQEKVFVK (135 aa). A glycan (N-linked (GlcNAc...) asparagine) is linked at Asn-398.

It belongs to the AB hydrolase superfamily. Lipase family. Homodimer.

The protein resides in the secreted. The catalysed reaction is a triacylglycerol + H2O = a diacylglycerol + a fatty acid + H(+). It catalyses the reaction a 1-acyl-sn-glycero-3-phosphocholine + H2O = sn-glycerol 3-phosphocholine + a fatty acid + H(+). The enzyme catalyses a 1,2-diacyl-sn-glycero-3-phosphocholine + H2O = a 2-acyl-sn-glycero-3-phosphocholine + a fatty acid + H(+). It carries out the reaction 1,2-di-(9Z-octadecenoyl)-sn-glycerol + H2O = 2-(9Z-octadecenoyl)-glycerol + (9Z)-octadecenoate + H(+). The catalysed reaction is 1,2,3-tri-(9Z-octadecenoyl)-glycerol + H2O = 2,3-di-(9Z)-octadecenoyl-sn-glycerol + (9Z)-octadecenoate + H(+). It catalyses the reaction 1-(9Z-octadecenoyl)-sn-glycero-3-phospho-L-serine + H2O = sn-glycero-3-phospho-L-serine + (9Z)-octadecenoate + H(+). The enzyme catalyses 1-hexadecanoyl-sn-glycero-3-phosphocholine + H2O = sn-glycerol 3-phosphocholine + hexadecanoate + H(+). It carries out the reaction 1,3-di-(9Z-octadecenoyl)-glycerol + H2O = 3-(9Z-octadecenoyl)-sn-glycerol + (9Z)-octadecenoate + H(+). The catalysed reaction is 1,2,3-tri-(9Z-octadecenoyl)-glycerol + H2O = di-(9Z)-octadecenoylglycerol + (9Z)-octadecenoate + H(+). It catalyses the reaction 1,2-di-(9Z-octadecenoyl)-sn-glycero-3-phosphocholine + H2O = (9Z-octadecenoyl)-sn-glycero-3-phosphocholine + (9Z)-octadecenoate + H(+). The enzyme catalyses 1,2,3-tributanoylglycerol + H2O = dibutanoylglycerol + butanoate + H(+). It carries out the reaction 1,2-dihexadecanoyl-sn-glycero-3-phosphocholine + H2O = hexadecanoyl-sn-glycero-3-phosphocholine + hexadecanoate + H(+). With respect to regulation, phospholipase A1 and lysophospholipase activities are inhibited by annexin II. Catalyzes the hydrolysis of triglycerides and phospholipids present in circulating plasma lipoproteins, including chylomicrons, intermediate density lipoproteins (IDL), low density lipoproteins (LDL) of large size and high density lipoproteins (HDL), releasing free fatty acids (FFA) and smaller lipoprotein particles. Also exhibits lysophospholipase activity. Can hydrolyze both neutral lipid and phospholipid substrates but shows a greater binding affinity for neutral lipid substrates than phospholipid substrates. In native LDL, preferentially hydrolyzes the phosphatidylcholine species containing polyunsaturated fatty acids at sn-2 position. This chain is Hepatic triacylglycerol lipase (Lipc), found in Rattus norvegicus (Rat).